Here is a 320-residue protein sequence, read N- to C-terminus: cUMP-AMP-activated phospholipase (320 aa).

The 182-residue stretch at 23 to 204 folds into the PNPLA domain; the sequence is LALDGGGAKG…CANNPTLFAI (182 aa). Residues 27–32 carry the GXGXXG motif; that stretch reads GGGAKG. Residues 59–63 carry the GXSXG motif; the sequence is GTSTG. S61 serves as the catalytic Nucleophile. The active-site Proton acceptor is the D191. Residues 191 to 193 carry the DGA/G motif; it reads DGG.

The protein belongs to the patatin family.

The enzyme catalyses a 1,2-diacyl-sn-glycero-3-phosphocholine + H2O = a 2-acyl-sn-glycero-3-phosphocholine + a fatty acid + H(+). With respect to regulation, phospholipase activity is specifically activated upon 3',3'-cUAMP binding. Is not activated by the other cyclic dinucleotides 3',3'-cGAMP, 3',3'-c-diAMP and 3',3'-c-diGMP. Therefore, is specifically activated by only the nucleotide synthesized from its adjacently encoded nucleotidyltransferase (CdnE). In terms of biological role, effector phospholipase of a CBASS antivirus system. CBASS (cyclic oligonucleotide-based antiphage signaling system) provides immunity against bacteriophage. The CD-NTase protein synthesizes cyclic nucleotides in response to infection; these serve as specific second messenger signals. The signals activate a diverse range of effectors, leading to bacterial cell death and thus abortive phage infection. A type II-A(UA) CBASS system. Functionally, phospholipase that is activated upon binding to the cyclic dinucleotide (CDN) second messenger 3',3'-cyclic UMP-AMP (3',3'-cUAMP). The polypeptide is cUMP-AMP-activated phospholipase (Escherichia coli).